The following is a 224-amino-acid chain: UPF0758 protein Csal_2972 (224 aa).

An MPN domain is found at 102–224; the sequence is ALTSPTLVRR…VVSFAERGWL (123 aa). Zn(2+)-binding residues include H173, H175, and D186. A JAMM motif motif is present at residues 173 to 186; the sequence is HNHPSGVAEPSDAD.

Belongs to the UPF0758 family.

This is UPF0758 protein Csal_2972 from Chromohalobacter salexigens (strain ATCC BAA-138 / DSM 3043 / CIP 106854 / NCIMB 13768 / 1H11).